Here is a 300-residue protein sequence, read N- to C-terminus: Protoheme IX farnesyltransferase (300 aa).

A run of 9 helical transmembrane segments spans residues 20-40, 49-69, 97-117, 122-142, 145-165, 176-196, 217-237, 242-262, and 278-298; these read ITKA…YLLG, WSVL…SNAY, VTAL…LYTI, AMFA…LKTV, LSVF…WVAA, LFLI…WFLY, ALQV…PVLG, LFIS…MLFY, and LMLV…VDKF.

The protein belongs to the UbiA prenyltransferase family. Protoheme IX farnesyltransferase subfamily.

Its subcellular location is the cell inner membrane. The catalysed reaction is heme b + (2E,6E)-farnesyl diphosphate + H2O = Fe(II)-heme o + diphosphate. It functions in the pathway porphyrin-containing compound metabolism; heme O biosynthesis; heme O from protoheme: step 1/1. In terms of biological role, converts heme B (protoheme IX) to heme O by substitution of the vinyl group on carbon 2 of heme B porphyrin ring with a hydroxyethyl farnesyl side group. In Flavobacterium johnsoniae (strain ATCC 17061 / DSM 2064 / JCM 8514 / BCRC 14874 / CCUG 350202 / NBRC 14942 / NCIMB 11054 / UW101) (Cytophaga johnsonae), this protein is Protoheme IX farnesyltransferase.